A 116-amino-acid polypeptide reads, in one-letter code: Acyl-CoA-binding protein homolog 3 (116 aa).

In terms of domain architecture, ACB spans 3–92; sequence LQEKFDAAVE…LNDMFDKIAE (90 aa). An acyl-CoA-binding positions include 34 to 38, lysine 60, and tyrosine 79; that span reads YSLFK.

It belongs to the ACBP family.

In terms of biological role, binds medium- and long-chain acyl-CoA esters with very high affinity and may function as an intracellular carrier of acyl-CoA esters. The protein is Acyl-CoA-binding protein homolog 3 (acbp-3) of Caenorhabditis elegans.